Consider the following 644-residue polypeptide: Pentatricopeptide repeat-containing protein At1g12775, mitochondrial (644 aa).

The transit peptide at 1–53 (MVRMMIRRLSSQASRFVQPRLLETGTLRIALINCPNELLFCCERGFSTFSDRN) directs the protein to the mitochondrion. PPR repeat units follow at residues 87–121 (TVID…GIAH), 122–156 (SIYT…GYEP), 157–191 (DTVI…GHKP), 192–226 (TLIT…GFQP), 227–261 (NEVT…NIKL), 262–296 (DAVK…GFKA), 297–331 (DIIT…KISP), 332–366 (NVVT…GIAP), 367–401 (NTIT…GCDP), 402–436 (DIMT…GVIA), 437–471 (NTVT…RVRP), 472–506 (DIVS…KMEL), 507–541 (DIGI…GVKL), 542–576 (DARA…GHAP), and 577–611 (DELT…GFPA).

Belongs to the PPR family. P subfamily.

Its subcellular location is the mitochondrion. The protein is Pentatricopeptide repeat-containing protein At1g12775, mitochondrial of Arabidopsis thaliana (Mouse-ear cress).